We begin with the raw amino-acid sequence, 372 residues long: Glutamate 5-kinase (372 aa).

ATP is bound at residue Lys-14. Residues Ser-54, Asp-141, and Asn-153 each coordinate substrate. 173 to 174 (TD) is a binding site for ATP. Positions 280–358 (RGTLVLDAGA…DAIEKLLGYV (79 aa)) constitute a PUA domain.

This sequence belongs to the glutamate 5-kinase family.

It is found in the cytoplasm. The enzyme catalyses L-glutamate + ATP = L-glutamyl 5-phosphate + ADP. It participates in amino-acid biosynthesis; L-proline biosynthesis; L-glutamate 5-semialdehyde from L-glutamate: step 1/2. In terms of biological role, catalyzes the transfer of a phosphate group to glutamate to form L-glutamate 5-phosphate. In Ectopseudomonas mendocina (strain ymp) (Pseudomonas mendocina), this protein is Glutamate 5-kinase.